Consider the following 896-residue polypeptide: DNA mismatch repair protein MutS (896 aa).

607 to 614 (GPNMSGKS) contributes to the ATP binding site. A disordered region spans residues 809–835 (ANSVAPNTAASMPVEAADESQPVESET).

The protein belongs to the DNA mismatch repair MutS family.

Its function is as follows. This protein is involved in the repair of mismatches in DNA. It is possible that it carries out the mismatch recognition step. This protein has a weak ATPase activity. The chain is DNA mismatch repair protein MutS from Lactiplantibacillus plantarum (strain ATCC BAA-793 / NCIMB 8826 / WCFS1) (Lactobacillus plantarum).